Reading from the N-terminus, the 788-residue chain is ATP-dependent 6-phosphofructokinase, platelet type (788 aa).

At methionine 1 the chain carries N-acetylmethionine. The tract at residues 1–399 (MSDQDSSTSS…NLNTYKRLAI (399 aa)) is N-terminal catalytic PFK domain 1. Serine 2, serine 6, serine 12, and serine 21 each carry phosphoserine. Residues glycine 34, 97–98 (RC), and 127–130 (GDGS) contribute to the ATP site. Residue aspartate 128 participates in Mg(2+) binding. Serine 142 carries the post-translational modification Phosphoserine. Substrate is bound by residues 173-175 (SID), arginine 210, 217-219 (MGR), glutamate 273, arginine 301, and 307-310 (HVQR). Aspartate 175 functions as the Proton acceptor in the catalytic mechanism. The residue at position 386 (serine 386) is a Phosphoserine. An N6-acetyllysine modification is found at lysine 395. Residues 400–411 (KEPDDKIPKSNC) are interdomain linker. The interval 412–788 (NVAIINVGAP…VHNHGELSAI (377 aa)) is C-terminal regulatory PFK domain 2. Residue arginine 481 coordinates beta-D-fructose 2,6-bisphosphate. Lysine 486 carries the post-translational modification N6-acetyllysine. Beta-D-fructose 2,6-bisphosphate-binding positions include 538 to 542 (TVSNN), arginine 576, 583 to 585 (MGG), and glutamate 639. Serine 540 is a glycosylation site (O-linked (GlcNAc) serine). A Phosphotyrosine modification is found at tyrosine 651. Residues arginine 665 and 671–674 (HMQQ) each bind beta-D-fructose 2,6-bisphosphate. Lysine 688 carries the N6-acetyllysine modification. Position 744 (arginine 744) interacts with beta-D-fructose 2,6-bisphosphate.

Belongs to the phosphofructokinase type A (PFKA) family. ATP-dependent PFK group I subfamily. Eukaryotic two domain clade 'E' sub-subfamily. In terms of assembly, homo- and heterotetramers. Phosphofructokinase (PFK) enzyme functions as a tetramer composed of different combinations of 3 types of subunits, called PFKM (M), PFKL (L) and PFKP (P). The composition of the PFK tetramer differs according to the tissue type it is present in. The kinetic and regulatory properties of the tetrameric enzyme are dependent on the subunit composition, hence can vary across tissues. Interacts with ATG4B; promoting phosphorylation of ATG4B. Requires Mg(2+) as cofactor. In terms of processing, glcNAcylation decreases enzyme activity. Phosphorylation at Ser-386 promotes interaction with ATG4B. Expressed at high level in neuroendocrine tissues.

It is found in the cytoplasm. The enzyme catalyses beta-D-fructose 6-phosphate + ATP = beta-D-fructose 1,6-bisphosphate + ADP + H(+). It participates in carbohydrate degradation; glycolysis; D-glyceraldehyde 3-phosphate and glycerone phosphate from D-glucose: step 3/4. Allosterically activated by ADP, AMP, or fructose 2,6-bisphosphate, and allosterically inhibited by ATP or citrate. Functionally, catalyzes the phosphorylation of D-fructose 6-phosphate to fructose 1,6-bisphosphate by ATP, the first committing step of glycolysis. The sequence is that of ATP-dependent 6-phosphofructokinase, platelet type (Pfkp) from Rattus norvegicus (Rat).